The primary structure comprises 260 residues: UPF0246 protein Cbei_1739 (260 aa).

Belongs to the UPF0246 family.

This Clostridium beijerinckii (strain ATCC 51743 / NCIMB 8052) (Clostridium acetobutylicum) protein is UPF0246 protein Cbei_1739.